The following is a 145-amino-acid chain: Large ribosomal subunit protein bL19 (145 aa).

This sequence belongs to the bacterial ribosomal protein bL19 family.

Its function is as follows. This protein is located at the 30S-50S ribosomal subunit interface and may play a role in the structure and function of the aminoacyl-tRNA binding site. This Brucella anthropi (strain ATCC 49188 / DSM 6882 / CCUG 24695 / JCM 21032 / LMG 3331 / NBRC 15819 / NCTC 12168 / Alc 37) (Ochrobactrum anthropi) protein is Large ribosomal subunit protein bL19.